Here is a 143-residue protein sequence, read N- to C-terminus: Nucleoside diphosphate kinase (143 aa).

6 residues coordinate ATP: Lys11, Phe59, Arg87, Thr93, Arg104, and Asn114. The active-site Pros-phosphohistidine intermediate is the His117.

This sequence belongs to the NDK family. As to quaternary structure, homotetramer. It depends on Mg(2+) as a cofactor.

Its subcellular location is the cytoplasm. It catalyses the reaction a 2'-deoxyribonucleoside 5'-diphosphate + ATP = a 2'-deoxyribonucleoside 5'-triphosphate + ADP. The catalysed reaction is a ribonucleoside 5'-diphosphate + ATP = a ribonucleoside 5'-triphosphate + ADP. Functionally, major role in the synthesis of nucleoside triphosphates other than ATP. The ATP gamma phosphate is transferred to the NDP beta phosphate via a ping-pong mechanism, using a phosphorylated active-site intermediate. The polypeptide is Nucleoside diphosphate kinase (Tolumonas auensis (strain DSM 9187 / NBRC 110442 / TA 4)).